A 382-amino-acid polypeptide reads, in one-letter code: Intermediate transcription factor 3 large subunit (382 aa).

Belongs to the poxviruses A23 family. Heterodimer of a 45 kDa and a 32 kDa subunit.

In terms of biological role, acts with RNA polymerase to initiate transcription from intermediate gene promoters. This Ectromelia virus (strain Moscow) (ECTV) protein is Intermediate transcription factor 3 large subunit (VITF3L).